The following is a 255-amino-acid chain: MLNVSGLWAEYQGKPALQDVSLQIASGQLVVVLGPSGCGKTTLLNLIAGFMTPSAGVITLDNIPVSGPSAERGVVFQNEGLLPWRDVVSNVEFGLQLAGMSKEQRRVTALKMLNRVGLAGFEHHFIWQLSGGMRQRVGIARALAVDPRLLLLDEPFGALDAFTREQMQELLLTIWRDTGKQILLITHDIEEAVFLASELLLLSPGPGQVVERLSLNFGQRYAEGEPCRAIKSDPEFIARREYVLGKVFQQREVLI.

In terms of domain architecture, ABC transporter spans 2-229 (LNVSGLWAEY…RYAEGEPCRA (228 aa)). 34 to 41 (GPSGCGKT) is an ATP binding site.

This sequence belongs to the ABC transporter superfamily. Taurine importer (TC 3.A.1.17.1) family. As to quaternary structure, the complex is composed of two ATP-binding proteins (TauB), two transmembrane proteins (TauC) and a solute-binding protein (TauA).

Its subcellular location is the cell inner membrane. It catalyses the reaction taurine(out) + ATP + H2O = taurine(in) + ADP + phosphate + H(+). In terms of biological role, part of the ABC transporter complex TauABC involved in taurine import. Responsible for energy coupling to the transport system. The sequence is that of Taurine import ATP-binding protein TauB from Yersinia pseudotuberculosis serotype I (strain IP32953).